A 401-amino-acid polypeptide reads, in one-letter code: 4-hydroxy-3-methylbut-2-enyl diphosphate reductase (401 aa).

Cys66 contributes to the [4Fe-4S] cluster binding site. His96 serves as a coordination point for (2E)-4-hydroxy-3-methylbut-2-enyl diphosphate. His96 is a dimethylallyl diphosphate binding site. Isopentenyl diphosphate is bound at residue His96. Residue Cys157 coordinates [4Fe-4S] cluster. Position 185 (His185) interacts with (2E)-4-hydroxy-3-methylbut-2-enyl diphosphate. His185 is a binding site for dimethylallyl diphosphate. His185 is an isopentenyl diphosphate binding site. The Proton donor role is filled by Glu187. Thr250 is a binding site for (2E)-4-hydroxy-3-methylbut-2-enyl diphosphate. Cys288 is a binding site for [4Fe-4S] cluster. Residues Ser317, Ser318, Asn319, and Ser379 each coordinate (2E)-4-hydroxy-3-methylbut-2-enyl diphosphate. Dimethylallyl diphosphate-binding residues include Ser317, Ser318, Asn319, and Ser379. Positions 317, 318, 319, and 379 each coordinate isopentenyl diphosphate.

Belongs to the IspH family. [4Fe-4S] cluster serves as cofactor.

The enzyme catalyses isopentenyl diphosphate + 2 oxidized [2Fe-2S]-[ferredoxin] + H2O = (2E)-4-hydroxy-3-methylbut-2-enyl diphosphate + 2 reduced [2Fe-2S]-[ferredoxin] + 2 H(+). It catalyses the reaction dimethylallyl diphosphate + 2 oxidized [2Fe-2S]-[ferredoxin] + H2O = (2E)-4-hydroxy-3-methylbut-2-enyl diphosphate + 2 reduced [2Fe-2S]-[ferredoxin] + 2 H(+). Its pathway is isoprenoid biosynthesis; dimethylallyl diphosphate biosynthesis; dimethylallyl diphosphate from (2E)-4-hydroxy-3-methylbutenyl diphosphate: step 1/1. It functions in the pathway isoprenoid biosynthesis; isopentenyl diphosphate biosynthesis via DXP pathway; isopentenyl diphosphate from 1-deoxy-D-xylulose 5-phosphate: step 6/6. Functionally, catalyzes the conversion of 1-hydroxy-2-methyl-2-(E)-butenyl 4-diphosphate (HMBPP) into a mixture of isopentenyl diphosphate (IPP) and dimethylallyl diphosphate (DMAPP). Acts in the terminal step of the DOXP/MEP pathway for isoprenoid precursor biosynthesis. This chain is 4-hydroxy-3-methylbut-2-enyl diphosphate reductase, found in Trichodesmium erythraeum (strain IMS101).